Reading from the N-terminus, the 471-residue chain is ATP synthase subunit beta (471 aa).

ATP is bound at residue 159–166 (GGAGVGKT).

The protein belongs to the ATPase alpha/beta chains family. As to quaternary structure, F-type ATPases have 2 components, CF(1) - the catalytic core - and CF(0) - the membrane proton channel. CF(1) has five subunits: alpha(3), beta(3), gamma(1), delta(1), epsilon(1). CF(0) has four main subunits: a(1), b(1), b'(1) and c(9-12).

Its subcellular location is the cell membrane. It catalyses the reaction ATP + H2O + 4 H(+)(in) = ADP + phosphate + 5 H(+)(out). In terms of biological role, produces ATP from ADP in the presence of a proton gradient across the membrane. The catalytic sites are hosted primarily by the beta subunits. This is ATP synthase subunit beta from Heliobacterium modesticaldum (strain ATCC 51547 / Ice1).